Reading from the N-terminus, the 512-residue chain is Ribonuclease Y (512 aa).

The helical transmembrane segment at 2–22 (VGMYIIIPIVTFIIGGLLAWL) threads the bilayer. The 61-residue stretch at 202-262 (SITVFHIESD…VRREIARLAL (61 aa)) folds into the KH domain. Residues 328–421 (LLQHARETAN…VQVCDAISGA (94 aa)) form the HD domain.

It belongs to the RNase Y family.

Its subcellular location is the cell membrane. Its function is as follows. Endoribonuclease that initiates mRNA decay. This is Ribonuclease Y from Parabacteroides distasonis (strain ATCC 8503 / DSM 20701 / CIP 104284 / JCM 5825 / NCTC 11152).